The following is a 208-amino-acid chain: Cysteine-rich protein 2 (208 aa).

The 53-residue stretch at 5–57 folds into the LIM zinc-binding 1 domain; that stretch reads CPKCDKTVYFAEKVSSLGKDWHRFCLRCEHCSKTLTPGGHAEHDGKPFCHKPC. At lysine 23 the chain carries N6-acetyllysine. The segment at 98-117 is disordered; sequence TEERKASGPPKGPSKASSVT. Phosphoserine is present on serine 104. Residues 104–115 show a composition bias toward low complexity; it reads SGPPKGPSKASS. One can recognise an LIM zinc-binding 2 domain in the interval 126 to 178; it reads CPRCNKRVYFAEKVTSLGKDWHRPCLRCERCGKTLTPGGHAEHDGQPYCHKPC. 2 positions are modified to N6-acetyllysine: lysine 138 and lysine 144.

As to quaternary structure, interacts with TGFB1I1.

This chain is Cysteine-rich protein 2 (CRIP2), found in Bos taurus (Bovine).